Reading from the N-terminus, the 320-residue chain is Malate dehydrogenase (320 aa).

Residues 10-15 (GAGNIG) and D34 each bind NAD(+). Substrate contacts are provided by R83 and R89. NAD(+) contacts are provided by residues N96 and 119–121 (ITN). Positions 121 and 152 each coordinate substrate. The Proton acceptor role is filled by H176.

This sequence belongs to the LDH/MDH superfamily. MDH type 3 family.

It carries out the reaction (S)-malate + NAD(+) = oxaloacetate + NADH + H(+). Its function is as follows. Catalyzes the reversible oxidation of malate to oxaloacetate. In Novosphingobium aromaticivorans (strain ATCC 700278 / DSM 12444 / CCUG 56034 / CIP 105152 / NBRC 16084 / F199), this protein is Malate dehydrogenase.